The primary structure comprises 91 residues: Chorion class B protein M3A5 (91 aa).

The interval 1 to 51 (VASENRYEGTVGVSGNLPFLGTADVAGEFPTAGIGEILYGCGNGAVGITRE) is central domain. Residues 52 to 91 (GGLGYGAGYGGGYGLGYGGYGGGYGLGYGGYGGCGCGCGY) form a right arm (Gly-rich tandem repeats) region.

The protein belongs to the chorion protein family.

Functionally, this protein is one of many from the eggshell of the silk moth. In Bombyx mori (Silk moth), this protein is Chorion class B protein M3A5.